We begin with the raw amino-acid sequence, 251 residues long: Eukaryotic translation initiation factor 3 subunit K (251 aa).

Residues Phe-46–Glu-224 enclose the PCI domain.

The protein belongs to the eIF-3 subunit K family. Component of the eukaryotic translation initiation factor 3 (eIF-3) complex.

The protein resides in the cytoplasm. Component of the eukaryotic translation initiation factor 3 (eIF-3) complex, which is involved in protein synthesis of a specialized repertoire of mRNAs and, together with other initiation factors, stimulates binding of mRNA and methionyl-tRNAi to the 40S ribosome. The eIF-3 complex specifically targets and initiates translation of a subset of mRNAs involved in cell proliferation. This Aspergillus oryzae (strain ATCC 42149 / RIB 40) (Yellow koji mold) protein is Eukaryotic translation initiation factor 3 subunit K.